The following is a 631-amino-acid chain: RING finger protein 112 (631 aa).

The RING-type zinc-finger motif lies at 57 to 98 (CSICLERLRDPISLDCGHDFCIRCFSTHRLPGCEPPCCPECR). The tract at residues 131-631 (PVRAEPLLLV…GDREPLLQEE (501 aa)) is interaction with ZBTB16. A GB1/RHD3-type G domain is found at 166–397 (DTPVCLLAVL…YVSDVLSAAP (232 aa)). 318 to 319 (RD) lines the GTP pocket. 2 consecutive transmembrane segments (helical) span residues 547-567 (LAAV…GVVG) and 580-600 (GMVA…GGGV).

This sequence belongs to the TRAFAC class dynamin-like GTPase superfamily. GB1/RHD3 GTPase family. GB1 subfamily. In terms of assembly, self-associates. Interacts with SP1 in an oxidative stress-regulated manner. Interacts with SIGMAR1 in an oxidative stress-regulated manner. Interacts with ZBTB16 (via C2H2-type zinc finger domains 1 and 2). Post-translationally, auto-ubiquitinated. In terms of tissue distribution, predominantly expressed in brain. Decreased expression in glioma brain tumors as compared to normal brains (at protein level).

It is found in the membrane. The protein localises to the cytoplasm. Its subcellular location is the nucleus. It localises to the nuclear body. The protein resides in the nucleoplasm. It is found in the endosome. The protein localises to the cytoplasmic vesicle. Its subcellular location is the secretory vesicle. It localises to the synaptic vesicle. The protein resides in the postsynaptic density. It is found in the perikaryon. The protein localises to the cell projection. Its subcellular location is the neuron projection. It catalyses the reaction S-ubiquitinyl-[E2 ubiquitin-conjugating enzyme]-L-cysteine + [acceptor protein]-L-lysine = [E2 ubiquitin-conjugating enzyme]-L-cysteine + N(6)-ubiquitinyl-[acceptor protein]-L-lysine.. It participates in protein modification; protein ubiquitination. Functionally, E3 ubiquitin-protein ligase that plays an important role in neuronal differentiation, including neurogenesis and gliogenesis, during brain development. During embryonic development initiates neuronal differentiation by inducing cell cycle arrest at the G0/G1 phase through up-regulation of cell-cycle regulatory proteins. Plays a role not only in the fetal period during the development of the nervous system, but also in the adult brain, where it is involved in the maintenance of neural functions and protection of the nervous tissue cells from oxidative stress-induced damage. Exhibits GTPase and E3 ubiquitin-protein ligase activities. Regulates dendritic spine density and synaptic neurotransmission; its ability to hydrolyze GTP is involved in the maintenance of dendritic spine density. The sequence is that of RING finger protein 112 (RNF112) from Homo sapiens (Human).